We begin with the raw amino-acid sequence, 226 residues long: AN1-type zinc finger protein 3 homolog (226 aa).

The A20-type zinc finger occupies 12–44 (PSLPPRCPCGFWGSSKTMNLCSKCFADFQKKQP). 4 residues coordinate Zn(2+): Cys18, Cys20, Cys32, and Cys35. Residues 42-149 (KQPDEDTAPS…DRPDNSSRSK (108 aa)) are disordered. Composition is skewed to polar residues over residues 49–59 (APSTSSSQSDL), 67–92 (DNGN…NVDS), and 105–114 (AHVSLTTPSK). Residues 134–146 (RLLDSGDRPDNSS) show a composition bias toward basic and acidic residues. The AN1-type zinc finger occupies 150–199 (QKSRRRCFRCQIKLELVQQELGSCRCGYVFCMLHRLPEQHDCTFDHMGRG). Cys156, Cys159, Cys173, Cys175, Cys180, His183, His189, and Cys191 together coordinate Zn(2+).

This is AN1-type zinc finger protein 3 homolog (zfand3) from Xenopus laevis (African clawed frog).